The following is a 146-amino-acid chain: Hemoglobin subunit beta (146 aa).

In terms of domain architecture, Globin spans 2 to 146; the sequence is FLTAEEKGLV…VANALAHKYH (145 aa). Serine 44 bears the Phosphoserine mark. Residue lysine 59 is modified to N6-acetyllysine. Heme b is bound at residue histidine 63. At lysine 82 the chain carries N6-acetyllysine. Residue histidine 92 participates in heme b binding. Residue cysteine 93 is modified to S-nitrosocysteine. The residue at position 144 (lysine 144) is an N6-acetyllysine.

This sequence belongs to the globin family. Heterotetramer of two alpha chains and two beta chains. Red blood cells.

In terms of biological role, involved in oxygen transport from the lung to the various peripheral tissues. The sequence is that of Hemoglobin subunit beta (HBB) from Lynx lynx (Eurasian lynx).